Here is a 281-residue protein sequence, read N- to C-terminus: sn-glycerol-3-phosphate transport system permease protein UgpE (281 aa).

Helical transmembrane passes span 16–36, 85–105, 113–133, 142–162, 202–222, and 247–267; these read LILGIAVILFPLYVAFVAATL, FSITLGKITVSMLSAFAIVWF, FFWMIFITLMLPVEVRIFPTV, LDSYAGLTLPLMASATATFLF, ALFVITFIYGWNQYLWPLLII, and WNSVMVAMLLTLIPPVVIVLV. The 192-residue stretch at 77–268 folds into the ABC transmembrane type-1 domain; that stretch reads LLNSFVMAFS…IPPVVIVLVM (192 aa).

Belongs to the binding-protein-dependent transport system permease family. UgpAE subfamily. The complex is composed of two ATP-binding proteins (UgpC), two transmembrane proteins (UgpA and UgpE) and a solute-binding protein (UgpB).

It is found in the cell inner membrane. In terms of biological role, part of the ABC transporter complex UgpBAEC involved in sn-glycerol-3-phosphate (G3P) import. Probably responsible for the translocation of the substrate across the membrane. Can also transport glycerophosphoryl diesters, which are hydrolyzed to G3P and alcohol during transport. The G3P moiety can be detected in the cytoplasm whereas the corresponding alcohol is usually found in the culture medium. It was proposed by Yang et al that the complex could also transport glycerol-2-phosphate (G2P) in vivo, but it was shown later by Wuttge et al that UgpB does not bind G2P, questioning this transport activity. G2P might be converted in the periplasm to G3P before its transport. This is sn-glycerol-3-phosphate transport system permease protein UgpE from Escherichia coli (strain K12).